Consider the following 189-residue polypeptide: Elongation factor P (189 aa).

Belongs to the elongation factor P family.

The protein localises to the cytoplasm. The protein operates within protein biosynthesis; polypeptide chain elongation. Involved in peptide bond synthesis. Stimulates efficient translation and peptide-bond synthesis on native or reconstituted 70S ribosomes in vitro. Probably functions indirectly by altering the affinity of the ribosome for aminoacyl-tRNA, thus increasing their reactivity as acceptors for peptidyl transferase. The polypeptide is Elongation factor P (Rhizobium etli (strain CIAT 652)).